We begin with the raw amino-acid sequence, 250 residues long: Ribosomal RNA small subunit methyltransferase J (250 aa).

S-adenosyl-L-methionine is bound by residues 101–102 (RD), 117–118 (ER), 153–154 (SS), and Asp-171.

The protein belongs to the methyltransferase superfamily. RsmJ family.

The protein localises to the cytoplasm. It carries out the reaction guanosine(1516) in 16S rRNA + S-adenosyl-L-methionine = N(2)-methylguanosine(1516) in 16S rRNA + S-adenosyl-L-homocysteine + H(+). In terms of biological role, specifically methylates the guanosine in position 1516 of 16S rRNA. This Escherichia coli (strain SMS-3-5 / SECEC) protein is Ribosomal RNA small subunit methyltransferase J.